The sequence spans 108 residues: Trp operon repressor homolog (108 aa).

A DNA-binding region spans residues 59–82 (QRQISQLLGVGVATITRGSNELKS).

This sequence belongs to the TrpR family. As to quaternary structure, homodimer.

The protein resides in the cytoplasm. Its function is as follows. This protein is an aporepressor. When complexed with L-tryptophan it binds the operator region of the trp operon and prevents the initiation of transcription. The polypeptide is Trp operon repressor homolog (Aliivibrio fischeri (strain MJ11) (Vibrio fischeri)).